The chain runs to 540 residues: MSAEPVCSALPAIPYHKLADLRYLSRGASGTVSSARHADWRVQVAVKHLHIHSPLLDSERNDVLREAEILHKARFSYILPILGICNEPEFLGIVTEYMPNGSLNELLHRKIEYPDVPWPLRFRILHEIALGVNYLHNMNPPLLHHDLKTQNILLDNEFHVKIADFGLSKWRMMSLSQSRSSKSAPEGGTIVYMPPENYEPGQKARASVKHDIYSYAIIIWEVLSRKQPFEDVTNPLQIMYSVSQGHRPDTNEESLPFDIPHRALMISLIESGWAQNPDERPSFLKCLIELEPVLRTFEEITFLEAVIQLKKTKLQNASRTVHLSDKKKRELSPNIPVNSGPREESCGSSQLHKTSGSPGTSRSLSAPQDKDFLSAKTQDFSALHQCSVNHSRNSDFCVDCQVAFCDHRTAPCSLAIVNPLSAEGNSGRFQPGIAQQWIQSKREDIVSQMTEACLNQSLDALLSRDLIMKEDYELISTKPTRTSKVRQLLDTTDIQGEEFARVIVQKLKDNKQMGLQPYPEILVLSQSPSLNFFHNKSHKK.

The region spanning 18–294 (LADLRYLSRG…KCLIELEPVL (277 aa)) is the Protein kinase domain. Residues 24–32 (LSRGASGTV) and Lys-47 contribute to the ATP site. The helix alphaC stretch occupies residues 65 to 73 (REAEILHKA). The Proton acceptor role is filled by Asp-146. The segment at 167–193 (LSKWRMMSLSQSRSSKSAPEGGTIVYM) is activation segment (AS). Ser-168 bears the Phosphoserine mark. Ser-174 carries the post-translational modification Phosphoserine; alternate. Residue Ser-176 is modified to Phosphoserine; by autocatalysis. Ser-178 bears the Phosphoserine; alternate mark. Ser-180 is subject to Phosphoserine. A Phosphoserine; alternate modification is found at Ser-181. A Glycyl lysine isopeptide (Lys-Gly) (interchain with G-Cter in ubiquitin) cross-link involves residue Lys-209. A disordered region spans residues 318–367 (SRTVHLSDKKKRELSPNIPVNSGPREESCGSSQLHKTSGSPGTSRSLSAP). Basic and acidic residues predominate over residues 322–331 (HLSDKKKREL). Residues 346 to 366 (CGSSQLHKTSGSPGTSRSLSA) show a composition bias toward polar residues. Phosphoserine is present on residues Ser-363 and Ser-391. The CARD domain occupies 432 to 524 (GIAQQWIQSK…LQPYPEILVL (93 aa)). At Tyr-472 the chain carries Phosphotyrosine; by autocatalysis. Ser-525, Ser-527, and Ser-529 each carry phosphoserine. A Glycyl lysine isopeptide (Lys-Gly) (interchain with G-Cter in ubiquitin) cross-link involves residue Lys-536. Phosphoserine is present on Ser-537.

Belongs to the protein kinase superfamily. TKL Ser/Thr protein kinase family. In terms of assembly, interacts (via CARD domain) with NOD2 (via CARD domain). Interacts (via CARD domain) with NOD1 (via CARD domain). Homooligomer; following interaction with NOD1 or NOD2, homooligomerizes via its CARD domain and forms long filaments named RIPosomes. Found in a signaling complex consisting of at least ARHGEF2, NOD2 and RIPK2. Interacts with ARHGEF2; the interaction mediates tyrosine phosphorylation of RIPK2 by Src kinase CSK. Interacts with MAP3K4; this interaction sequesters RIPK2 from the NOD2 signaling pathway. Interacts with IKBKG/NEMO. The polyubiquitinated protein interacts with MAP3K7/TAK1; interaction is indirect and is mediated by TAB2 and TAB3 that bind to polyubiquitin chains attached to RIPK2. Binds to CFLAR/CLARP and CASP1 via their CARD domains. Binds to BIRC3/c-IAP1 and BIRC2/c-IAP2, TRAF1, TRAF2, TRAF5 and TRAF6. Interacts with NLRP10. Interacts with CARD9. Interacts with INAVA; the interaction takes place upon PRR stimulation. Interacts (via CARD domain) with NGFR (via death domain). Interacts with IRGM; promoting RIPK2 degradation. In terms of processing, polyubiquitinated via both 'Lys-63'- and 'Met-1'-linked polyubiquitin following recruitment by NOD1 or NOD2, creating docking sites for downstream effectors, triggering activation of the NF-kappa-B and MAP kinases signaling. 'Lys-63'-linked polyubiquitination by XIAP is essential for NOD2 signaling and promotes recruitment of the LUBAC complex. Also polyubiquitinated with 'Lys-63'-linked chains by PELI3, BIRC2/c-IAP1 and BIRC3/c-IAP2. Ubiquitinated on Lys-209 via 'Lys-63'-linked by ITCH. Undergoes 'Lys-63'-linked deubiquitination by MYSM1 to attenuate NOD2-mediated inflammation and tissue damage. Polyubiquitinated with 'Lys-63'-linked chains in response to Shigella infection, promoting its SQSTM1/p62-dependent autophagic degradation. Undergoes 'Met-1'-linked polyubiquitination; the head-to-tail linear polyubiquitination is mediated by the LUBAC complex in response to NOD2 stimulation 'Met-1'-linked polyubiquitination. 'Lys-63'-linked polyubiquitination by XIAP is required for recruimtent of the LUBAC complex and subsequent. Linear polyubiquitination is restricted by FAM105B/otulin, probably to limit NOD2-dependent pro-inflammatory signaling activation of NF-kappa-B. Autophosphorylated. Phosphorylated at Ser-176, either via autophosphorylation or by LRRK2, enhancing activity. Autophosphorylation at Tyr-472 is required for effective NOD2 signaling. Autophosphorylation is however not essential for NOD2 signaling. Post-translationally, degraded via selective autophagy following interaction with IRGM. IRGM promotes NOD1/NOD2-RIPK2 RIPosome recruitment to autophagosome membranes. RIPK2 biquitinated via 'Lys-63'-linked chains is then recognized by SQSTM1/p62, leading to the SQSTM1/p62-dependent autophagic degradation of the NOD1/NOD2-RIPK2 RIPosome.

It is found in the cytoplasm. It localises to the cell membrane. The protein localises to the endoplasmic reticulum. The catalysed reaction is L-seryl-[protein] + ATP = O-phospho-L-seryl-[protein] + ADP + H(+). The enzyme catalyses L-threonyl-[protein] + ATP = O-phospho-L-threonyl-[protein] + ADP + H(+). It carries out the reaction L-tyrosyl-[protein] + ATP = O-phospho-L-tyrosyl-[protein] + ADP + H(+). Its activity is regulated as follows. In the inactive state, the helix alphaC is packed against the helical, non-phosphorylated activation segment (AS). Upon activation, helix alphaC is displaced and the phosphorylated AS becomes disordered. In terms of biological role, serine/threonine/tyrosine-protein kinase that plays an essential role in modulation of innate and adaptive immune responses. Acts as a key effector of NOD1 and NOD2 signaling pathways: upon activation by bacterial peptidoglycans, NOD1 and NOD2 oligomerize and recruit RIPK2 via CARD-CARD domains, leading to the formation of RIPK2 filaments. Once recruited, RIPK2 autophosphorylates and undergoes 'Lys-63'-linked polyubiquitination by E3 ubiquitin ligases XIAP, BIRC2 and BIRC3, as well as 'Met-1'-linked (linear) polyubiquitination by the LUBAC complex, becoming a scaffolding protein for downstream effectors. 'Met-1'-linked polyubiquitin chains attached to RIPK2 recruit IKBKG/NEMO, which undergoes 'Lys-63'-linked polyubiquitination in a RIPK2-dependent process. 'Lys-63'-linked polyubiquitin chains attached to RIPK2 serve as docking sites for TAB2 and TAB3 and mediate the recruitment of MAP3K7/TAK1 to IKBKG/NEMO, inducing subsequent activation of IKBKB/IKKB. In turn, NF-kappa-B is released from NF-kappa-B inhibitors and translocates into the nucleus where it activates the transcription of hundreds of genes involved in immune response, growth control, or protection against apoptosis. The protein kinase activity is dispensable for the NOD1 and NOD2 signaling pathways. Contributes to the tyrosine phosphorylation of the guanine exchange factor ARHGEF2 through Src tyrosine kinase leading to NF-kappa-B activation by NOD2. Also involved in adaptive immunity: plays a role during engagement of the T-cell receptor (TCR) in promoting BCL10 phosphorylation and subsequent NF-kappa-B activation. Plays a role in the inactivation of RHOA in response to NGFR signaling. This Bos taurus (Bovine) protein is Receptor-interacting serine/threonine-protein kinase 2 (RIPK2).